Reading from the N-terminus, the 60-residue chain is Large ribosomal subunit protein bL32 (60 aa).

The span at 1 to 19 shows a compositional bias: basic residues; the sequence is MAVPKRKKSKSRRNMHRSH. The disordered stretch occupies residues 1 to 24; that stretch reads MAVPKRKKSKSRRNMHRSHHAIEP.

This sequence belongs to the bacterial ribosomal protein bL32 family.

This is Large ribosomal subunit protein bL32 from Wolbachia pipientis wMel.